A 425-amino-acid polypeptide reads, in one-letter code: Enolase (425 aa).

Gln-162 lines the (2R)-2-phosphoglycerate pocket. Glu-204 (proton donor) is an active-site residue. Mg(2+) contacts are provided by Asp-241, Glu-282, and Asp-309. The (2R)-2-phosphoglycerate site is built by Lys-334, Arg-363, Ser-364, and Lys-385. Lys-334 functions as the Proton acceptor in the catalytic mechanism.

The protein belongs to the enolase family. Mg(2+) is required as a cofactor.

Its subcellular location is the cytoplasm. The protein resides in the secreted. It is found in the cell surface. The catalysed reaction is (2R)-2-phosphoglycerate = phosphoenolpyruvate + H2O. It participates in carbohydrate degradation; glycolysis; pyruvate from D-glyceraldehyde 3-phosphate: step 4/5. In terms of biological role, catalyzes the reversible conversion of 2-phosphoglycerate (2-PG) into phosphoenolpyruvate (PEP). It is essential for the degradation of carbohydrates via glycolysis. This Corynebacterium jeikeium (strain K411) protein is Enolase.